Consider the following 388-residue polypeptide: Succinate--CoA ligase [ADP-forming] subunit beta (388 aa).

Positions 9 to 244 constitute an ATP-grasp domain; the sequence is KQIFAQYGLP…PSQEDAREAA (236 aa). Residues Lys46, 53–55, Glu99, Ala102, and Glu107 contribute to the ATP site; that span reads GRG. Residues Asn199 and Asp213 each coordinate Mg(2+). Substrate contacts are provided by residues Asn264 and 321–323; that span reads GIV.

It belongs to the succinate/malate CoA ligase beta subunit family. As to quaternary structure, heterotetramer of two alpha and two beta subunits. It depends on Mg(2+) as a cofactor.

It catalyses the reaction succinate + ATP + CoA = succinyl-CoA + ADP + phosphate. The catalysed reaction is GTP + succinate + CoA = succinyl-CoA + GDP + phosphate. Its pathway is carbohydrate metabolism; tricarboxylic acid cycle; succinate from succinyl-CoA (ligase route): step 1/1. In terms of biological role, succinyl-CoA synthetase functions in the citric acid cycle (TCA), coupling the hydrolysis of succinyl-CoA to the synthesis of either ATP or GTP and thus represents the only step of substrate-level phosphorylation in the TCA. The beta subunit provides nucleotide specificity of the enzyme and binds the substrate succinate, while the binding sites for coenzyme A and phosphate are found in the alpha subunit. The sequence is that of Succinate--CoA ligase [ADP-forming] subunit beta from Mannheimia succiniciproducens (strain KCTC 0769BP / MBEL55E).